The chain runs to 52 residues: Phospholamban (52 aa).

M1 carries the post-translational modification N-acetylmethionine. The Cytoplasmic segment spans residues 1–31 (MDKVQYLTRSAIRRASTIEMPQQARQNLQNL). S16 bears the Phosphoserine; by PKA and DMPK mark. The residue at position 17 (T17) is a Phosphothreonine; by CaMK2. The chain crosses the membrane as a helical span at residues 32-52 (FINFCLILICLLLICIIVMLL). Residue C36 is the site of S-palmitoyl cysteine attachment.

Belongs to the phospholamban family. Homopentamer. Can also form heterooligomers with other sarcoplasmic/endoplasmic reticulum calcium ATPase (SERCA) regulators ARLN, ERLN, SLN and STRIT1/DWORF. Monomer. Interacts with HAX1. Interacts as a monomer with ATP2A2; the interaction decreases ATP2A2 Ca(2+) affinity. Interacts with VMP1; VMP1 competes with PLN and SLN to prevent them from forming an inhibitory complex with ATP2A2. Interacts with S100A1 in a Ca(2+)-dependent manner. In terms of processing, phosphorylation by DMPK may stimulate sarcoplasmic reticulum calcium uptake in cardiomyocytes. Phosphorylation by PKA abolishes the inhibition of ATP2A2-mediated calcium uptake. Phosphorylated at Thr-17 by CaMK2, and in response to beta-adrenergic stimulation. Post-translationally, palmitoylated by ZDHHC16, promoting formation of the homopentamer. In elongated spermatids, proteolytically cleaved by SPPL2C which modulates intracellular Ca(2+) homeostasis. As to expression, heart.

Its subcellular location is the endoplasmic reticulum membrane. It is found in the sarcoplasmic reticulum membrane. The protein localises to the mitochondrion membrane. The protein resides in the membrane. Functionally, reversibly inhibits the activity of ATP2A2/SERCA2 in cardiac sarcoplasmic reticulum by decreasing the apparent affinity of the ATPase for Ca(2+). Binds preferentially to the ATP-bound E1 conformational form of ATP2A2 which predominates at low Ca(2+) concentrations during the diastolic phase of the cardiac cycle. Inhibits ATP2A2 Ca(2+) affinity by disrupting its allosteric activation by ATP. Modulates the contractility of the heart muscle in response to physiological stimuli via its effects on ATP2A2. Modulates calcium re-uptake during muscle relaxation and plays an important role in calcium homeostasis in the heart muscle. The degree of ATP2A2 inhibition depends on the oligomeric state of PLN. ATP2A2 inhibition is alleviated by PLN phosphorylation. Also inhibits the activity of ATP2A3/SERCA3. Controls intracellular Ca(2+) levels in elongated spermatids and may play a role in germ cell differentiation. In the thalamic reticular nucleus of the brain, plays a role in the regulation of sleep patterns and executive functioning. The protein is Phospholamban of Canis lupus familiaris (Dog).